Reading from the N-terminus, the 387-residue chain is Proline-rich protein 5 (387 aa).

2 interaction with RICTOR regions span residues 10–96 and 189–219; these read MSSP…LTKG and HESR…YGLY. Positions 11 to 33 are disordered; that stretch reads SSPSLSDLGKREPGAAGADERGT. Basic and acidic residues predominate over residues 18-33; it reads LGKREPGAAGADERGT. Serine 253 is modified (phosphoserine). Disordered stretches follow at residues 262–347 and 365–387; these read NPVA…PETL and DFGR…PSVV. A compositionally biased stretch (low complexity) spans 310–321; that stretch reads SSPSPHSGPCPS. A Phosphoserine modification is found at serine 373.

This sequence belongs to the PROTOR family. Associated component of the mechanistic target of rapamycin complex 2 (mTORC2). Binds directly to MTOR and RICTOR within the TORC2 complex.

Associated subunit of mTORC2, which regulates cell growth and survival in response to hormonal signals. mTORC2 is activated by growth factors, but, in contrast to mTORC1, seems to be nutrient-insensitive. mTORC2 seems to function upstream of Rho GTPases to regulate the actin cytoskeleton, probably by activating one or more Rho-type guanine nucleotide exchange factors. PRR5 plays an important role in regulation of PDGFRB expression and in modulation of platelet-derived growth factor signaling. May act as a tumor suppressor in breast cancer. This is Proline-rich protein 5 from Rattus norvegicus (Rat).